Reading from the N-terminus, the 489-residue chain is Acetyl-coenzyme A carboxylase carboxyl transferase subunit beta, chloroplastic (489 aa).

One can recognise a CoA carboxyltransferase N-terminal domain in the interval 225–489 (LWIQCDNCYG…FFPLNKTEIK (265 aa)). C229, C232, C245, and C248 together coordinate Zn(2+). The C4-type zinc finger occupies 229-248 (CDNCYGLMYKKVEMNVCEEC).

The protein belongs to the AccD/PCCB family. Acetyl-CoA carboxylase is a heterohexamer composed of biotin carboxyl carrier protein, biotin carboxylase and 2 subunits each of ACCase subunit alpha and ACCase plastid-coded subunit beta (accD). Requires Zn(2+) as cofactor.

The protein localises to the plastid. The protein resides in the chloroplast stroma. It carries out the reaction N(6)-carboxybiotinyl-L-lysyl-[protein] + acetyl-CoA = N(6)-biotinyl-L-lysyl-[protein] + malonyl-CoA. It functions in the pathway lipid metabolism; malonyl-CoA biosynthesis; malonyl-CoA from acetyl-CoA: step 1/1. Its function is as follows. Component of the acetyl coenzyme A carboxylase (ACC) complex. Biotin carboxylase (BC) catalyzes the carboxylation of biotin on its carrier protein (BCCP) and then the CO(2) group is transferred by the transcarboxylase to acetyl-CoA to form malonyl-CoA. This chain is Acetyl-coenzyme A carboxylase carboxyl transferase subunit beta, chloroplastic, found in Draba nemorosa (Woodland whitlowgrass).